A 173-amino-acid polypeptide reads, in one-letter code: Shikimate kinase 1 (173 aa).

Position 14–19 (14–19) interacts with ATP; the sequence is GAGKST. Residue Ser-18 coordinates Mg(2+). Substrate-binding residues include Asp-36, Arg-60, and Gly-82. Arg-120 lines the ATP pocket. Arg-140 lines the substrate pocket. Residue Gln-157 participates in ATP binding.

This sequence belongs to the shikimate kinase family. In terms of assembly, monomer. Requires Mg(2+) as cofactor.

The protein resides in the cytoplasm. The catalysed reaction is shikimate + ATP = 3-phosphoshikimate + ADP + H(+). The protein operates within metabolic intermediate biosynthesis; chorismate biosynthesis; chorismate from D-erythrose 4-phosphate and phosphoenolpyruvate: step 5/7. Catalyzes the specific phosphorylation of the 3-hydroxyl group of shikimic acid using ATP as a cosubstrate. This is Shikimate kinase 1 from Shigella boydii serotype 18 (strain CDC 3083-94 / BS512).